Reading from the N-terminus, the 114-residue chain is Dolichyl-diphosphooligosaccharide--protein glycosyltransferase subunit DAD2 (114 aa).

Over 1 to 30 (MPKAAGDAKLLIQSLNKAYAATPTNLKIID) the chain is Cytoplasmic. Residues 31–51 (LYVVFAVATALVQVVYMGIVG) traverse the membrane as a helical segment. The Lumenal portion of the chain corresponds to 52 to 54 (SFP). A helical membrane pass occupies residues 55–75 (FNSFLSGVLSSIGTAVLGVCL). The Cytoplasmic portion of the chain corresponds to 76–93 (RIQVNKDNKEFKDLPPER). Residues 94–114 (AFADFVLCNLVLHLVIMNFLG) traverse the membrane as a helical segment.

Belongs to the DAD/OST2 family. In terms of assembly, component of the oligosaccharyltransferase (OST) complex.

Its subcellular location is the endoplasmic reticulum membrane. Its pathway is protein modification; protein glycosylation. In terms of biological role, subunit of the oligosaccharyl transferase (OST) complex that catalyzes the initial transfer of a defined glycan (Glc(3)Man(9)GlcNAc(2) in eukaryotes) from the lipid carrier dolichol-pyrophosphate to an asparagine residue within an Asn-X-Ser/Thr consensus motif in nascent polypeptide chains, the first step in protein N-glycosylation. N-glycosylation occurs cotranslationally and the complex associates with the Sec61 complex at the channel-forming translocon complex that mediates protein translocation across the endoplasmic reticulum (ER). All subunits are required for a maximal enzyme activity. This chain is Dolichyl-diphosphooligosaccharide--protein glycosyltransferase subunit DAD2 (DAD2), found in Hordeum vulgare (Barley).